A 209-amino-acid chain; its full sequence is Uracil phosphoribosyltransferase (209 aa).

5-phospho-alpha-D-ribose 1-diphosphate contacts are provided by residues arginine 79, arginine 104, and 131 to 139 (DPMLATGGS). Uracil is bound by residues isoleucine 194 and 199–201 (GDA). Aspartate 200 provides a ligand contact to 5-phospho-alpha-D-ribose 1-diphosphate.

The protein belongs to the UPRTase family. Requires Mg(2+) as cofactor.

It carries out the reaction UMP + diphosphate = 5-phospho-alpha-D-ribose 1-diphosphate + uracil. The protein operates within pyrimidine metabolism; UMP biosynthesis via salvage pathway; UMP from uracil: step 1/1. With respect to regulation, allosterically activated by GTP. Its function is as follows. Catalyzes the conversion of uracil and 5-phospho-alpha-D-ribose 1-diphosphate (PRPP) to UMP and diphosphate. The polypeptide is Uracil phosphoribosyltransferase (Macrococcus caseolyticus (strain JCSC5402) (Macrococcoides caseolyticum)).